The primary structure comprises 458 residues: Ribulose bisphosphate carboxylase (458 aa).

Asn-111 provides a ligand contact to substrate. Lys-166 serves as the catalytic Proton acceptor. A substrate-binding site is contributed by Lys-168. Positions 191, 193, and 194 each coordinate Mg(2+). Lys-191 carries the post-translational modification N6-carboxylysine. His-287 acts as the Proton acceptor in catalysis. Residues Arg-288, His-321, and Ser-368 each coordinate substrate.

The protein belongs to the RuBisCO large chain family. Type II subfamily. As to quaternary structure, homodimer. Mg(2+) is required as a cofactor.

The catalysed reaction is 2 (2R)-3-phosphoglycerate + 2 H(+) = D-ribulose 1,5-bisphosphate + CO2 + H2O. It carries out the reaction D-ribulose 1,5-bisphosphate + O2 = 2-phosphoglycolate + (2R)-3-phosphoglycerate + 2 H(+). Its function is as follows. RuBisCO catalyzes two reactions: the carboxylation of D-ribulose 1,5-bisphosphate, the primary event in carbon dioxide fixation, as well as the oxidative fragmentation of the pentose substrate. Both reactions occur simultaneously and in competition at the same active site. The sequence is that of Ribulose bisphosphate carboxylase (cbbM) from Rhodobacter capsulatus (Rhodopseudomonas capsulata).